The following is a 96-amino-acid chain: Tenecin-3 (96 aa).

The N-terminal stretch at 1 to 18 (MKTFVICLILVVAVSAAP) is a signal peptide. Residues 19 to 96 (DHHDGHLGGH…HQGGYKTHGH (78 aa)) are disordered. Tandem repeats lie at residues 23–26 (GHLG), 31–34 (GHQG), 35–38 (GQQG), 39–42 (GHLG), 43–46 (GQQG), 47–50 (GHLG), 51–54 (GHQG), 59–62 (GHLG), 63–66 (GHQG), 67–70 (GIGG), 77–80 (GQHG), and 86–89 (GHQG). A 12 X 4 AA repeats of G-X-X-G region spans residues 23–89 (GHLGGHQTGH…GPGTGAGHQG (67 aa)). The span at 26–89 (GGHQTGHQGG…GPGTGAGHQG (64 aa)) shows a compositional bias: gly residues.

It to H.diomphalia holotricin 3.

It localises to the secreted. Functionally, antifungal heat stable protein produced in response to injury. It is active against C.albicans. No antibacterial activity against Gram-positive and Gram-negative bacteria. In Tenebrio molitor (Yellow mealworm beetle), this protein is Tenecin-3.